A 271-amino-acid chain; its full sequence is Elongation factor Ts (271 aa).

Residues 76 to 79 are involved in Mg(2+) ion dislocation from EF-Tu; sequence TDFV.

The protein belongs to the EF-Ts family.

It is found in the cytoplasm. In terms of biological role, associates with the EF-Tu.GDP complex and induces the exchange of GDP to GTP. It remains bound to the aminoacyl-tRNA.EF-Tu.GTP complex up to the GTP hydrolysis stage on the ribosome. The polypeptide is Elongation factor Ts (Mycobacterium tuberculosis (strain ATCC 25177 / H37Ra)).